Consider the following 494-residue polypeptide: Glucose-6-phosphate 1-dehydrogenase (494 aa).

R46 and K150 together coordinate NADP(+). Substrate contacts are provided by H180, K184, E218, and D237. H242 acts as the Proton acceptor in catalysis. K342 contributes to the substrate binding site.

This sequence belongs to the glucose-6-phosphate dehydrogenase family.

The catalysed reaction is D-glucose 6-phosphate + NADP(+) = 6-phospho-D-glucono-1,5-lactone + NADPH + H(+). The protein operates within carbohydrate degradation; pentose phosphate pathway; D-ribulose 5-phosphate from D-glucose 6-phosphate (oxidative stage): step 1/3. In terms of biological role, catalyzes the oxidation of glucose 6-phosphate to 6-phosphogluconolactone. The protein is Glucose-6-phosphate 1-dehydrogenase of Aggregatibacter actinomycetemcomitans (Actinobacillus actinomycetemcomitans).